Here is a 330-residue protein sequence, read N- to C-terminus: MSSDELTSTSSLIVIPCLNEASHIEALIEKLRPSLTPLNARVVIADGGSTDGTREIARRLATEDPRVLFLDNPKRIQSAAVNRAVAELGAGSDYLIRIDAHGTYPDDYCERLVEDALATGADSVVVAMQTVGFSTFQKATAFAQNSKLGNGGSKHRTGAVGHWAEHGHHALMRIEAFKAVGGYDESFSHNEDAELDYRLGKAGYRIWMTDKTSMVYYPRAKLVPLFWQYFGYGRGRAKNFLKHRAMPGLRQMLPLAVAPIAFGALLAIVNWMAVVPVGVWAAACLGYGVWMALGQRNPYGPLAAVAAMVMHLAWSAGFWRELLDFRRRVA.

3 helical membrane passes run 116–136 (ALAT…FSTF), 260–280 (IAFG…VGVW), and 299–319 (YGPL…AGFW).

Belongs to the glycosyltransferase 2 family.

The protein localises to the cell membrane. It functions in the pathway glycan metabolism; exopolysaccharide biosynthesis. Its function is as follows. Glycosyltransferase required for the synthesis of succinoglycan (EPS I). Needed for the addition of the second sugar (glucose). Catalyzes the formation of a beta-1,3 linkage with the galactose lipid carrier. This is Succinoglycan biosynthesis protein ExoA (exoA) from Rhizobium meliloti (strain 1021) (Ensifer meliloti).